The chain runs to 194 residues: Anthranilate synthase component 2 (194 aa).

In terms of domain architecture, Glutamine amidotransferase type-1 spans 2–194 (KIFFIDNFDS…QSVGFLEGLL (193 aa)). 57–59 (GPG) is an L-glutamine binding site. The active-site Nucleophile; for GATase activity is the cysteine 84. L-glutamine contacts are provided by residues glutamine 88 and 134-135 (SL). Catalysis depends on for GATase activity residues histidine 170 and glutamate 172.

As to quaternary structure, heterotetramer consisting of two non-identical subunits: a beta subunit (TrpG) and a large alpha subunit (TrpE).

The catalysed reaction is chorismate + L-glutamine = anthranilate + pyruvate + L-glutamate + H(+). It participates in amino-acid biosynthesis; L-tryptophan biosynthesis; L-tryptophan from chorismate: step 1/5. Functionally, part of a heterotetrameric complex that catalyzes the two-step biosynthesis of anthranilate, an intermediate in the biosynthesis of L-tryptophan. In the first step, the glutamine-binding beta subunit (TrpG) of anthranilate synthase (AS) provides the glutamine amidotransferase activity which generates ammonia as a substrate that, along with chorismate, is used in the second step, catalyzed by the large alpha subunit of AS (TrpE) to produce anthranilate. In the absence of TrpG, TrpE can synthesize anthranilate directly from chorismate and high concentrations of ammonia. This is Anthranilate synthase component 2 (trpG) from Helicobacter pylori (strain ATCC 700392 / 26695) (Campylobacter pylori).